Here is an 831-residue protein sequence, read N- to C-terminus: DNA ligase (831 aa).

Residues 34–38, 83–84, and E114 contribute to the NAD(+) site; these read DADYD and SL. K116 serves as the catalytic N6-AMP-lysine intermediate. Residues R137, E174, K291, and K315 each contribute to the NAD(+) site. Residues C409, C412, C427, and C433 each coordinate Zn(2+). Residues 749 to 831 enclose the BRCT domain; it reads AHTAPLNGQS…LAFLEQYSAQ (83 aa).

It belongs to the NAD-dependent DNA ligase family. LigA subfamily. The cofactor is Mg(2+). Mn(2+) serves as cofactor.

It catalyses the reaction NAD(+) + (deoxyribonucleotide)n-3'-hydroxyl + 5'-phospho-(deoxyribonucleotide)m = (deoxyribonucleotide)n+m + AMP + beta-nicotinamide D-nucleotide.. In terms of biological role, DNA ligase that catalyzes the formation of phosphodiester linkages between 5'-phosphoryl and 3'-hydroxyl groups in double-stranded DNA using NAD as a coenzyme and as the energy source for the reaction. It is essential for DNA replication and repair of damaged DNA. The protein is DNA ligase of Xylella fastidiosa (strain M23).